The primary structure comprises 147 residues: UPF0306 protein YhbP (147 aa).

It belongs to the UPF0306 family.

The protein is UPF0306 protein YhbP of Escherichia fergusonii (strain ATCC 35469 / DSM 13698 / CCUG 18766 / IAM 14443 / JCM 21226 / LMG 7866 / NBRC 102419 / NCTC 12128 / CDC 0568-73).